Consider the following 241-residue polypeptide: E3 ubiquitin-protein ligase RNF166 (241 aa).

Positions 8 to 30 are disordered; it reads VASSQHRQHHSHQSLATPSSADS. The RING-type zinc finger occupies 37–77; sequence CPICLEVYYKPVAIGSCGHTFCGECLQPCLQVSSPLCPLCR. Zn(2+) is bound by residues cysteine 102, cysteine 105, histidine 117, and cysteine 121. A C2HC RNF-type zinc finger spans residues 102–121; that stretch reads CRGCSKKVTLAKMRAHISSC. One can recognise a UIM domain in the interval 225 to 241; the sequence is DEEAALQAALALSLSEN.

The protein localises to the cytoplasm. The enzyme catalyses S-ubiquitinyl-[E2 ubiquitin-conjugating enzyme]-L-cysteine + [acceptor protein]-L-lysine = [E2 ubiquitin-conjugating enzyme]-L-cysteine + N(6)-ubiquitinyl-[acceptor protein]-L-lysine.. Its pathway is protein modification; protein ubiquitination. Its function is as follows. E3 ubiquitin-protein ligase that promotes the ubiquitination of different substrates. This is E3 ubiquitin-protein ligase RNF166 (rnf166) from Xenopus laevis (African clawed frog).